A 299-amino-acid polypeptide reads, in one-letter code: tRNA pseudouridine synthase B (299 aa).

Residue Asp39 is the Nucleophile of the active site.

Belongs to the pseudouridine synthase TruB family. Type 1 subfamily.

It carries out the reaction uridine(55) in tRNA = pseudouridine(55) in tRNA. Responsible for synthesis of pseudouridine from uracil-55 in the psi GC loop of transfer RNAs. The polypeptide is tRNA pseudouridine synthase B (Syntrophomonas wolfei subsp. wolfei (strain DSM 2245B / Goettingen)).